Here is a 206-residue protein sequence, read N- to C-terminus: Large ribosomal subunit protein uL4 (206 aa).

The protein belongs to the universal ribosomal protein uL4 family. Part of the 50S ribosomal subunit.

Functionally, one of the primary rRNA binding proteins, this protein initially binds near the 5'-end of the 23S rRNA. It is important during the early stages of 50S assembly. It makes multiple contacts with different domains of the 23S rRNA in the assembled 50S subunit and ribosome. In terms of biological role, forms part of the polypeptide exit tunnel. The chain is Large ribosomal subunit protein uL4 from Cereibacter sphaeroides (strain KD131 / KCTC 12085) (Rhodobacter sphaeroides).